The primary structure comprises 482 residues: Dual specificity protein phosphatase 10 (482 aa).

The Rhodanese domain maps to 168 to 285 (PSQGPVIIDC…FKQNHENLCD (118 aa)). Positions 199–215 (KISRRRLQQGKITVLDL) are interaction with MAP kinases. Positions 321 to 464 (ELTPILPFLF…LLEFEEDLNN (144 aa)) constitute a Tyrosine-protein phosphatase domain. Cys408 acts as the Phosphocysteine intermediate in catalysis.

It belongs to the protein-tyrosine phosphatase family. Non-receptor class dual specificity subfamily. As to quaternary structure, monomer. Interacts with MAPK14.

It localises to the cytoplasm. Its subcellular location is the nucleus. The enzyme catalyses O-phospho-L-tyrosyl-[protein] + H2O = L-tyrosyl-[protein] + phosphate. It catalyses the reaction O-phospho-L-seryl-[protein] + H2O = L-seryl-[protein] + phosphate. The catalysed reaction is O-phospho-L-threonyl-[protein] + H2O = L-threonyl-[protein] + phosphate. Protein phosphatase involved in the inactivation of MAP kinases. Has a specificity for the MAPK11/MAPK12/MAPK13/MAPK14 subfamily. It preferably dephosphorylates p38. The polypeptide is Dual specificity protein phosphatase 10 (DUSP10) (Bos taurus (Bovine)).